Here is a 92-residue protein sequence, read N- to C-terminus: RNA-binding protein Hfq (92 aa).

Positions 10-71 constitute a Sm domain; sequence DLFLNQLRKE…ISSIMPSKPI (62 aa). The interval 73 to 92 is disordered; sequence YMAQAQNNQQASQQSNNNQG. Low complexity predominate over residues 75–92; sequence AQAQNNQQASQQSNNNQG.

It belongs to the Hfq family. As to quaternary structure, homohexamer.

Its function is as follows. RNA chaperone that binds small regulatory RNA (sRNAs) and mRNAs to facilitate mRNA translational regulation in response to envelope stress, environmental stress and changes in metabolite concentrations. Also binds with high specificity to tRNAs. The sequence is that of RNA-binding protein Hfq from Caldicellulosiruptor bescii (strain ATCC BAA-1888 / DSM 6725 / KCTC 15123 / Z-1320) (Anaerocellum thermophilum).